Here is a 505-residue protein sequence, read N- to C-terminus: Peroxisome proliferator-activated receptor gamma (505 aa).

T84 is a glycosylation site (O-linked (GlcNAc) threonine). A Phosphoserine; by MAPK modification is found at S112. Residues 136-210 (AIECRVCGDK…VGMSHNAIRF (75 aa)) constitute a DNA-binding region (nuclear receptor). 2 NR C4-type zinc fingers span residues 139 to 159 (CRVC…CEGC) and 176 to 198 (CDLN…FQKC). The interval 205–280 (HNAIRFGRMP…DKSPFVIYDM (76 aa)) is interaction with FAM120B. The NR LBD domain occupies 238-503 (DLRALAKHLY…HPLLQEIYKD (266 aa)). A Glycyl lysine isopeptide (Lys-Gly) (interchain with G-Cter in ubiquitin) cross-link involves residue K252. A 9aaTAD motif is present at residues 495-503 (PLLQEIYKD).

This sequence belongs to the nuclear hormone receptor family. NR1 subfamily. Heterodimer with other nuclear receptors, such as RXRA. The heterodimer with the retinoic acid receptor RXRA is called adipocyte-specific transcription factor ARF6. Interacts with NCOA6 coactivator, leading to a strong increase in transcription of target genes. Interacts with coactivator PPARBP, leading to a mild increase in transcription of target genes. Interacts with NOCA7 in a ligand-inducible manner. Interacts with NCOA1 and NCOA2 LXXLL motifs. Interacts with ASXL1, ASXL2, DNTTIP2, FAM120B, MAP2K1/MEK1, NR0B2, PDPK1, PRDM16, PRMT2 and TGFB1I1. Interacts (when activated by agonist) with PPP5C. Interacts with HELZ2 and THRAP3; the interaction stimulates the transcriptional activity of PPARG. Interacts with PER2, the interaction is ligand dependent and blocks PPARG recruitment to target promoters. Interacts with NOCT. Interacts with FOXO1 (acetylated form). Interacts with ACTN4. Interacts (when in the liganded conformation) with GPS2. Interacts with CRY1 and CRY2 in a ligand-dependent manner. In the absence of hormonal ligand, interacts with TACC1. In macrophages, interacts with PAQR3 and STUB1; the interactions promote PPARG poylubiquitination and STUB1-mediated degradation. In terms of processing, O-GlcNAcylation at Thr-84 reduces transcriptional activity in adipocytes. Phosphorylated in basal conditions and dephosphorylated when treated with the ligand. May be dephosphorylated by PPP5C. The phosphorylated Ser-112 form is recognized by PER2 and repressed, dephosphorylation at Ser-112 induces adipogenic activity. Ser-112 phosphorylation levels are reduced by 65% in brown adipose tissue compared to white adipose tissue. Post-translationally, ubiquitinated by E3 ubiquitin-protein ligase complex containing FBXO9; leading to proteasomal degradation. In terms of processing, ubiquitinated by E3 ubiquitin-protein ligase complex containing FBXO9; leading to proteasomal degradation. Ubiquitinated at Lys-252 by TRIM55 leading to proteasomal degradation. Ubiquitinated by E3 ubiquitin-protein ligase STUB1/CHIP; leading to proteasomal degradation. In terms of tissue distribution, highest expression in white and brown adipose tissue. Also found in liver, skeletal muscle, heart, adrenal gland, spleen, kidney and intestine. Isoform 2 is more abundant than isoform 1 in adipose tissue.

It is found in the nucleus. The protein localises to the cytoplasm. With respect to regulation, PDPK1 activates its transcriptional activity independently of its kinase activity. In terms of biological role, nuclear receptor that binds peroxisome proliferators such as hypolipidemic drugs and fatty acids. Once activated by a ligand, the nuclear receptor binds to DNA specific PPAR response elements (PPRE) and modulates the transcription of its target genes, such as acyl-CoA oxidase. It therefore controls the peroxisomal beta-oxidation pathway of fatty acids. Key regulator of adipocyte differentiation and glucose homeostasis. ARF6 acts as a key regulator of the tissue-specific adipocyte P2 (aP2) enhancer. Acts as a critical regulator of gut homeostasis by suppressing NF-kappa-B-mediated pro-inflammatory responses. Plays a role in the regulation of cardiovascular circadian rhythms by regulating the transcription of BMAL1 in the blood vessels. The protein is Peroxisome proliferator-activated receptor gamma (Pparg) of Mus musculus (Mouse).